Consider the following 227-residue polypeptide: Casparian strip membrane protein 2 (227 aa).

Residues 1 to 59 (MSSTSEATVIHMDGAAGKTPATAVPPPPPPAPTAPVQQQRKAGGVPFLLRSGAEGFRRC) are Cytoplasmic-facing. Positions 17 to 37 (GKTPATAVPPPPPPAPTAPVQ) are disordered. A compositionally biased stretch (pro residues) spans 23–33 (AVPPPPPPAPT). Residues 60 to 80 (MALLDLLLRVAAMGPTLAAAI) traverse the membrane as a helical segment. The Extracellular portion of the chain corresponds to 81 to 107 (STGTSDETLSVFTHYFQFRARFDDFSA). Residues 108–128 (FTFFMVANAVAAGYLLMSLPF) traverse the membrane as a helical segment. At 129-149 (SAFGVIRPKATSVRLLLLICD) the chain is on the cytoplasmic side. The chain crosses the membrane as a helical span at residues 150 to 170 (TIMVVLVTAAASAAAAIVYVA). Over 171–197 (HEGNRRANWVPICMQFHGFCKRTSGAV) the chain is Extracellular. Residues 198 to 218 (VASFLAVLIFILLVFLGACAI) traverse the membrane as a helical segment. Residues 219–227 (RRRHTTTKH) are Cytoplasmic-facing.

This sequence belongs to the Casparian strip membrane proteins (CASP) family. Homodimer and heterodimers.

Its subcellular location is the cell membrane. Its function is as follows. Regulates membrane-cell wall junctions and localized cell wall deposition. Required for establishment of the Casparian strip membrane domain (CSD) and the subsequent formation of Casparian strips, a cell wall modification of the root endodermis that determines an apoplastic barrier between the intraorganismal apoplasm and the extraorganismal apoplasm and prevents lateral diffusion. In Brachypodium distachyon (Purple false brome), this protein is Casparian strip membrane protein 2.